Reading from the N-terminus, the 152-residue chain is D-aminoacyl-tRNA deacylase (152 aa).

Positions 142 to 143 (GP) match the Gly-cisPro motif, important for rejection of L-amino acids motif.

This sequence belongs to the DTD family. In terms of assembly, homodimer.

The protein resides in the cytoplasm. It carries out the reaction glycyl-tRNA(Ala) + H2O = tRNA(Ala) + glycine + H(+). The catalysed reaction is a D-aminoacyl-tRNA + H2O = a tRNA + a D-alpha-amino acid + H(+). Functionally, an aminoacyl-tRNA editing enzyme that deacylates mischarged D-aminoacyl-tRNAs. Also deacylates mischarged glycyl-tRNA(Ala), protecting cells against glycine mischarging by AlaRS. Acts via tRNA-based rather than protein-based catalysis; rejects L-amino acids rather than detecting D-amino acids in the active site. By recycling D-aminoacyl-tRNA to D-amino acids and free tRNA molecules, this enzyme counteracts the toxicity associated with the formation of D-aminoacyl-tRNA entities in vivo and helps enforce protein L-homochirality. The chain is D-aminoacyl-tRNA deacylase from Paraburkholderia phymatum (strain DSM 17167 / CIP 108236 / LMG 21445 / STM815) (Burkholderia phymatum).